The sequence spans 757 residues: RNA-directed RNA polymerase catalytic subunit (757 aa).

Positions 50–82 (SEKGKWTTNTETGAPQLNPIDGPLPEDNEPSGY) are disordered. The segment covering 55-64 (WTTNTETGAP) has biased composition (polar residues). 2 short sequence motifs (nuclear localization signal) span residues 187–195 (RKRRVRDNM) and 203–216 (RTIG…NKRS). Residues 249-256 (RGFVYFVE) form a promoter-binding site region. A RdRp catalytic domain is found at 286–483 (VRKMMTNSQD…GINMTKKKSY (198 aa)).

It belongs to the influenza viruses polymerase PB1 family. In terms of assembly, influenza RNA polymerase is composed of three subunits: PB1, PB2 and PA. Interacts (via N-terminus) with PA (via C-terminus). Interacts (via C-terminus) with PB2 (via N-terminus); this interaction is essential for transcription initiation. Post-translationally, phosphorylated by host PRKCA.

It is found in the host nucleus. Its subcellular location is the host cytoplasm. It catalyses the reaction RNA(n) + a ribonucleoside 5'-triphosphate = RNA(n+1) + diphosphate. Its function is as follows. RNA-dependent RNA polymerase which is responsible for replication and transcription of virus RNA segments. The transcription of viral mRNAs occurs by a unique mechanism called cap-snatching. 5' methylated caps of cellular mRNAs are cleaved after 10-13 nucleotides by PA. In turn, these short capped RNAs are used as primers by PB1 for transcription of viral mRNAs. During virus replication, PB1 initiates RNA synthesis and copy vRNA into complementary RNA (cRNA) which in turn serves as a template for the production of more vRNAs. The sequence is that of RNA-directed RNA polymerase catalytic subunit from Aves (Cat).